The following is a 374-amino-acid chain: Ribosomal RNA large subunit methyltransferase G (374 aa).

This sequence belongs to the methyltransferase superfamily. RlmG family.

It is found in the cytoplasm. The catalysed reaction is guanosine(1835) in 23S rRNA + S-adenosyl-L-methionine = N(2)-methylguanosine(1835) in 23S rRNA + S-adenosyl-L-homocysteine + H(+). Its function is as follows. Specifically methylates the guanine in position 1835 (m2G1835) of 23S rRNA. The chain is Ribosomal RNA large subunit methyltransferase G from Pseudomonas syringae pv. tomato (strain ATCC BAA-871 / DC3000).